We begin with the raw amino-acid sequence, 173 residues long: ATP-dependent protease subunit HslV (173 aa).

Thr2 is a catalytic residue. Na(+)-binding residues include Gly158, Asp161, and Ser164.

The protein belongs to the peptidase T1B family. HslV subfamily. A double ring-shaped homohexamer of HslV is capped on each side by a ring-shaped HslU homohexamer. The assembly of the HslU/HslV complex is dependent on binding of ATP.

It localises to the cytoplasm. It catalyses the reaction ATP-dependent cleavage of peptide bonds with broad specificity.. With respect to regulation, allosterically activated by HslU binding. Functionally, protease subunit of a proteasome-like degradation complex believed to be a general protein degrading machinery. The chain is ATP-dependent protease subunit HslV from Haemophilus ducreyi (strain 35000HP / ATCC 700724).